We begin with the raw amino-acid sequence, 62 residues long: MAQLKVTQTRSTIGGKQNQRETLATLGLGRIGKSTVQEDTPGVRGMIRVVAHLVSVEEVDES.

Belongs to the universal ribosomal protein uL30 family. Part of the 50S ribosomal subunit.

The protein is Large ribosomal subunit protein uL30 of Beutenbergia cavernae (strain ATCC BAA-8 / DSM 12333 / CCUG 43141 / JCM 11478 / NBRC 16432 / NCIMB 13614 / HKI 0122).